The sequence spans 240 residues: 4-hydroxy-tetrahydrodipicolinate reductase (240 aa).

NAD(+) is bound by residues 79–81 (ATT) and 103–106 (SANM). The Proton donor/acceptor role is filled by His135. His136 lines the (S)-2,3,4,5-tetrahydrodipicolinate pocket. The Proton donor role is filled by Lys139. 145-146 (GT) contributes to the (S)-2,3,4,5-tetrahydrodipicolinate binding site.

It belongs to the DapB family.

Its subcellular location is the cytoplasm. It catalyses the reaction (S)-2,3,4,5-tetrahydrodipicolinate + NAD(+) + H2O = (2S,4S)-4-hydroxy-2,3,4,5-tetrahydrodipicolinate + NADH + H(+). It carries out the reaction (S)-2,3,4,5-tetrahydrodipicolinate + NADP(+) + H2O = (2S,4S)-4-hydroxy-2,3,4,5-tetrahydrodipicolinate + NADPH + H(+). Its pathway is amino-acid biosynthesis; L-lysine biosynthesis via DAP pathway; (S)-tetrahydrodipicolinate from L-aspartate: step 4/4. In terms of biological role, catalyzes the conversion of 4-hydroxy-tetrahydrodipicolinate (HTPA) to tetrahydrodipicolinate. This Staphylococcus aureus (strain Mu3 / ATCC 700698) protein is 4-hydroxy-tetrahydrodipicolinate reductase.